Consider the following 248-residue polypeptide: MKTLILLIQFFTRIPIPIAINMDEVNLKKGSALLPFVGLIIGAWNWLVFTLVALVMPLPVAIIAGLFAEIIITGGFHVDALADTADGLFSSRKKERMLEIMKDSRVGANGVIAICFYFLFYGALFLSVPSAYEIGWLFFVLPIVAKGVTMLLFAKMTYAGSNEGLGSIFLGVPWWPIAISQLFVLFILGLVFSYIGLLAYAGVILFTIIYRTFVYKRIGGMNGDTLGAGGQMGQLVCLFCLVLVWGLI.

Helical transmembrane passes span 24–44 (EVNL…IGAW), 47–67 (LVFT…AGLF), 70–90 (IIIT…GLFS), 106–126 (VGAN…ALFL), 134–154 (IGWL…LLFA), 165–185 (LGSI…LFVL), 186–206 (FILG…VILF), and 228–248 (AGGQ…WGLI).

The protein belongs to the CobS family. Mg(2+) is required as a cofactor.

The protein resides in the cell membrane. The enzyme catalyses alpha-ribazole + adenosylcob(III)inamide-GDP = adenosylcob(III)alamin + GMP + H(+). The catalysed reaction is alpha-ribazole 5'-phosphate + adenosylcob(III)inamide-GDP = adenosylcob(III)alamin 5'-phosphate + GMP + H(+). Its pathway is cofactor biosynthesis; adenosylcobalamin biosynthesis; adenosylcobalamin from cob(II)yrinate a,c-diamide: step 7/7. Functionally, joins adenosylcobinamide-GDP and alpha-ribazole to generate adenosylcobalamin (Ado-cobalamin). Also synthesizes adenosylcobalamin 5'-phosphate from adenosylcobinamide-GDP and alpha-ribazole 5'-phosphate. This chain is Adenosylcobinamide-GDP ribazoletransferase, found in Listeria welshimeri serovar 6b (strain ATCC 35897 / DSM 20650 / CCUG 15529 / CIP 8149 / NCTC 11857 / SLCC 5334 / V8).